Consider the following 92-residue polypeptide: Small ribosomal subunit protein uS19c (92 aa).

Belongs to the universal ribosomal protein uS19 family.

Its subcellular location is the plastid. It is found in the chloroplast. Functionally, protein S19 forms a complex with S13 that binds strongly to the 16S ribosomal RNA. The protein is Small ribosomal subunit protein uS19c of Fagopyrum esculentum subsp. ancestrale (Wild buckwheat).